The following is a 194-amino-acid chain: E3 ubiquitin-protein ligase RNF185 (194 aa).

A disordered region spans residues 1-32 (MASKGPTTSASTKSSSTGGTSGSSSSNGAGDN). A required for ubiquitin ligase activity and protection against ER stress-induced cell death region spans residues 31 to 82 (DNTNQDNTFECNICLDTAKDAVISLCGHLFCWPCLHQWLETRPNRQVCPVCK). The RING-type zinc finger occupies 41-82 (CNICLDTAKDAVISLCGHLFCWPCLHQWLETRPNRQVCPVCK). Residues 92 to 125 (PLYGRGSTGQQDPREKTPPRPQGQRPEPENRGGF) form a disordered region. The next 2 membrane-spanning stretches (helical) occupy residues 133–153 (GGFQMSFGIGAFPFGIFATAF) and 174–194 (QFLSRLFLFVALVIMFWLLIA).

The protein localises to the mitochondrion outer membrane. Its subcellular location is the endoplasmic reticulum membrane. It catalyses the reaction S-ubiquitinyl-[E2 ubiquitin-conjugating enzyme]-L-cysteine + [acceptor protein]-L-lysine = [E2 ubiquitin-conjugating enzyme]-L-cysteine + N(6)-ubiquitinyl-[acceptor protein]-L-lysine.. It functions in the pathway protein modification; protein ubiquitination. Its function is as follows. E3 ubiquitin-protein ligase that regulates selective mitochondrial autophagy by mediating 'Lys-63'-linked polyubiquitination. Acts in the endoplasmic reticulum (ER)-associated degradation (ERAD) pathway, which targets misfolded proteins that accumulate in the endoplasmic reticulum (ER) for ubiquitination and subsequent proteasome-mediated degradation. Protects cells from ER stress-induced apoptosis. Responsible for the cotranslational ubiquitination and degradation of CFTR in the ERAD pathway. Also acts as a regulator of the innate antiviral response by catalyzing 'Lys-27'-linked polyubiquitination of CGAS, thereby promoting CGAS cyclic GMP-AMP synthase activity. Preferentially associates with the E2 enzymes UBE2J1 and UBE2J2. This Gallus gallus (Chicken) protein is E3 ubiquitin-protein ligase RNF185 (RNF185).